The chain runs to 237 residues: Ribosomal RNA small subunit methyltransferase G (237 aa).

S-adenosyl-L-methionine is bound by residues G78, F83, 129-130, and R148; that span reads AE.

This sequence belongs to the methyltransferase superfamily. RNA methyltransferase RsmG family.

Its subcellular location is the cytoplasm. Its function is as follows. Specifically methylates the N7 position of a guanine in 16S rRNA. The protein is Ribosomal RNA small subunit methyltransferase G of Streptococcus pyogenes serotype M1.